A 141-amino-acid polypeptide reads, in one-letter code: Hemoglobin subunit alpha-3 (141 aa).

Ser1 is subject to N-acetylserine. The region spanning 1–141 (SLSASEKAAV…VSAVLTSKYR (141 aa)) is the Globin domain. His58 contacts O2. His87 contributes to the heme b binding site.

It belongs to the globin family. In terms of assembly, heterotetramer of two alpha chains and two beta chains. In terms of tissue distribution, red blood cells.

In terms of biological role, this is a tadpole (larval) alpha chain. This chain is Hemoglobin subunit alpha-3, found in Aquarana catesbeiana (American bullfrog).